The chain runs to 457 residues: Exodeoxyribonuclease 7 large subunit (457 aa).

Belongs to the XseA family. Heterooligomer composed of large and small subunits.

The protein localises to the cytoplasm. It carries out the reaction Exonucleolytic cleavage in either 5'- to 3'- or 3'- to 5'-direction to yield nucleoside 5'-phosphates.. Functionally, bidirectionally degrades single-stranded DNA into large acid-insoluble oligonucleotides, which are then degraded further into small acid-soluble oligonucleotides. The chain is Exodeoxyribonuclease 7 large subunit from Escherichia coli O127:H6 (strain E2348/69 / EPEC).